We begin with the raw amino-acid sequence, 465 residues long: FAD-dependent monooxygenase penM (465 aa).

A helical membrane pass occupies residues 5 to 25 (QFHVIIVGGSIAGLTLAHCLH). FAD-binding residues include E35, G49, R108, D299, and A312. The chain crosses the membrane as a helical span at residues 435–455 (VLVLLLSALTWSCLGNMNIIM).

Belongs to the paxM FAD-dependent monooxygenase family. Requires FAD as cofactor.

It localises to the membrane. The protein operates within secondary metabolite biosynthesis. Functionally, FAD-dependent monooxygenase; part of the gene cluster that mediates the biosynthesis of the indole diterpenes penitrems. The geranylgeranyl diphosphate (GGPP) synthase penG catalyzes the first step in penitrem biosynthesis via conversion of farnesyl pyrophosphate and isopentyl pyrophosphate into geranylgeranyl pyrophosphate (GGPP). Condensation of indole-3-glycerol phosphate with GGPP by the prenyl transferase penC then forms 3-geranylgeranylindole (3-GGI). Epoxidation by the FAD-dependent monooxygenase penM leads to a epoxidized-GGI that is substrate of the terpene cyclase penB for cyclization to yield paspaline. Paspaline is subsequently converted to 13-desoxypaxilline by the cytochrome P450 monooxygenase penP, the latter being then converted to paxilline by the cytochrome P450 monooxygenase penQ. Paxilline is converted to beta-paxitriol via C-10 ketoreduction by the short-chain dehydrogenase PC-15 which can be monoprenylated at the C-20 by the indole diterpene prenyltransferase penD. A two-step elimination (acetylation and elimination) process performed by the O-acetyltransferase PC-16 and the P.simplicissimum ptmI-ortholog not yet identified in P.crustosum, leads to the production of the prenylated form of penijanthine. The FAD-linked oxidoreductase ptmO then converts the prenylated form of penijanthine into PC-M5 which is in turn transformed into PC-M4 by the aromatic dimethylallyltransferase PC-22. A series of oxidation steps involving 4 cytochrome P450 monooxygenases (PC-21, PC-05, PC-23, PC-20) and a FAD-dependent monooxygenase (PC-14) are required for the transformation of PC-M4 to penitrems A and E. Synthesis of these final products is proposed to proceed via penitrems D and C (PC-21, PC-05, PC-14) and penitrems B and F (PC-21, PC-05, PC-14, PC-23). The chain is FAD-dependent monooxygenase penM from Penicillium crustosum (Blue mold fungus).